Consider the following 596-residue polypeptide: Deuterosome assembly protein 1 (596 aa).

Coiled-coil stretches lie at residues isoleucine 8 to isoleucine 68, cysteine 130 to glutamate 180, and isoleucine 227 to arginine 284. Over residues threonine 297–alanine 306 the composition is skewed to polar residues. A disordered region spans residues threonine 297–threonine 316. A coiled-coil region spans residues serine 337–serine 402. The segment at aspartate 447 to tyrosine 467 is disordered. Positions glycine 457–tyrosine 467 are enriched in polar residues.

The protein belongs to the CEP63 family.

It is found in the cytoplasm. Its function is as follows. Key structural component of the deuterosome, a structure that promotes de novo centriole amplification in multiciliated cells. Deuterosome-mediated centriole amplification occurs in terminally differentiated multiciliated cells and can generate more than 100 centrioles. Probably sufficient for the specification and formation of the deuterosome inner core. This Xenopus tropicalis (Western clawed frog) protein is Deuterosome assembly protein 1.